We begin with the raw amino-acid sequence, 376 residues long: Integrator complex assembly factor WDR73 (376 aa).

WD repeat units lie at residues 84–123 (FSEEPVECLIHIPGTRCLVTSGNSNTLQIWDIGGDDSDVI), 276–316 (ASKN…TESS), and 337–376 (TSPAVVTAHSWHPSRPKTLLSAATDGSLHVWDWVDKITDR). The disordered stretch occupies residues 316–336 (SSPQPIFSHRGHEMSQEAKSS).

The protein belongs to the WD repeat WDR73 family.

It is found in the cytoplasm. The protein localises to the cytoskeleton. The protein resides in the spindle. Its subcellular location is the spindle pole. It localises to the cleavage furrow. In terms of biological role, component of a multiprotein complex required for the assembly of the RNA endonuclease module of the integrator complex. Associates with ints9 and ints11 in the cytoplasm, stabilizing the ints9-ints11 heterodimer and blocking the active site of ints11. Brat1 then joins the complex and plugs the active site of ints11, leading to wdr73 release and nuclear import of ints9 and ints11. This Danio rerio (Zebrafish) protein is Integrator complex assembly factor WDR73 (wdr73).